We begin with the raw amino-acid sequence, 456 residues long: Serine/threonine-protein kinase PBS1 (456 aa).

Positions 1 to 57 (MGCFSCFDSSDDEKLNPVDESNHGQKKQSQPTVSNNISGLPSGGEKLSSKTNGGSKR) are disordered. Residue G2 is the site of N-myristoyl glycine attachment. S-palmitoyl cysteine attachment occurs at residues C3 and C6. A compositionally biased stretch (basic and acidic residues) spans 12 to 23 (DEKLNPVDESNH). At S21 the chain carries Phosphoserine. Residues 27–39 (KQSQPTVSNNISG) show a composition bias toward polar residues. The Protein kinase domain occupies 86–363 (FHPDTFLGEG…ADVVTALSYL (278 aa)). ATP contacts are provided by residues 92–100 (LGEGGFGRV) and K115. Phosphotyrosine is present on Y160. D213 (proton acceptor) is an active-site residue. Phosphoserine is present on residues S217 and S247. Phosphothreonine is present on residues T248 and T253. Y261 is subject to Phosphotyrosine. Residues 292 to 296 (SEMPH) carry the Recognition motif required for RPS5-mediated plant resistance to P.syringae motif. A disordered region spans residues 368 to 456 (YDPSKDDSRR…QGTSESNSTG (89 aa)). Composition is skewed to basic and acidic residues over residues 370–392 (PSKD…RNDD) and 400–429 (FDLE…RAVA). The segment covering 446–456 (EQGTSESNSTG) has biased composition (polar residues).

It belongs to the protein kinase superfamily. Ser/Thr protein kinase family. In terms of assembly, in infected plant cells, it interacts with the P.syringae virulence protein avrPphB. In uninfected plants, autophosphorylated form interacts with RPS5. Interacts with FLS2. Cleaved by avrPphB in infected plant cells. Its cleavage serves as a signal that triggers the RPS5-mediated defense system. In terms of processing, autophosphorylates. Autophosphorylation may be required to trigger the RPS5-mediated plant defense system. Post-translationally, palmitoylation at Cys-3 and Cys-6 are required for plasma membrane location that is essential for the RPS5-mediated plant defense response.

It is found in the cell membrane. It catalyses the reaction L-seryl-[protein] + ATP = O-phospho-L-seryl-[protein] + ADP + H(+). The catalysed reaction is L-threonyl-[protein] + ATP = O-phospho-L-threonyl-[protein] + ADP + H(+). Protein kinase required for plant defense mechanism mediated by the disease resistance (R) protein RPS5. In case of infection by Pseudomonas syringae, AvrPphB triggers RPS5-mediated defense mechanism via the cleavage of PBS1. Both kinase activity and cleavage by avrPphB are independently required to trigger the RPS5-mediated resistance. Contributes to PAMP-triggered immunity (PTI) signaling and defense responses downstream of FLS2. This is Serine/threonine-protein kinase PBS1 from Arabidopsis thaliana (Mouse-ear cress).